The primary structure comprises 356 residues: S-adenosylmethionine:tRNA ribosyltransferase-isomerase (356 aa).

It belongs to the QueA family. As to quaternary structure, monomer.

The protein localises to the cytoplasm. The enzyme catalyses 7-aminomethyl-7-carbaguanosine(34) in tRNA + S-adenosyl-L-methionine = epoxyqueuosine(34) in tRNA + adenine + L-methionine + 2 H(+). It participates in tRNA modification; tRNA-queuosine biosynthesis. Its function is as follows. Transfers and isomerizes the ribose moiety from AdoMet to the 7-aminomethyl group of 7-deazaguanine (preQ1-tRNA) to give epoxyqueuosine (oQ-tRNA). The polypeptide is S-adenosylmethionine:tRNA ribosyltransferase-isomerase (Citrobacter koseri (strain ATCC BAA-895 / CDC 4225-83 / SGSC4696)).